The sequence spans 218 residues: N-(5'-phosphoribosyl)anthranilate isomerase (218 aa).

Belongs to the TrpF family.

It carries out the reaction N-(5-phospho-beta-D-ribosyl)anthranilate = 1-(2-carboxyphenylamino)-1-deoxy-D-ribulose 5-phosphate. The protein operates within amino-acid biosynthesis; L-tryptophan biosynthesis; L-tryptophan from chorismate: step 3/5. This is N-(5'-phosphoribosyl)anthranilate isomerase from Halalkalibacterium halodurans (strain ATCC BAA-125 / DSM 18197 / FERM 7344 / JCM 9153 / C-125) (Bacillus halodurans).